Reading from the N-terminus, the 329-residue chain is Solute carrier family 35 member B1 (329 aa).

A run of 8 helical transmembrane segments spans residues 21–41 (AVCF…QETI), 60–80 (TLVF…IQFF), 91–111 (WLYG…NSAL), 142–162 (YPMA…LFLY), 175–195 (VFGF…LTGV), 220–240 (TLVL…LAFT), 250–270 (ILLF…TVVY), and 292–312 (VLLF…LVFL). A Di-lysine motif motif is present at residues 325–329 (KKTTH).

It belongs to the nucleotide-sugar transporter family. SLC35B subfamily.

The protein localises to the endoplasmic reticulum membrane. Probable sugar transporter. This chain is Solute carrier family 35 member B1 (slc35b1), found in Danio rerio (Zebrafish).